The chain runs to 651 residues: Probable Xaa-Pro aminopeptidase P (651 aa).

Mn(2+) is bound by residues D448, D459, E557, and E571.

This sequence belongs to the peptidase M24B family. Mn(2+) is required as a cofactor.

It carries out the reaction Release of any N-terminal amino acid, including proline, that is linked to proline, even from a dipeptide or tripeptide.. Catalyzes the removal of a penultimate prolyl residue from the N-termini of peptides. The chain is Probable Xaa-Pro aminopeptidase P (AMPP) from Coccidioides posadasii (strain C735) (Valley fever fungus).